A 1197-amino-acid chain; its full sequence is MKFLPYIFLLCCGLWSTISFADEDYIEYRGISSNNRVTLDPLRLSNKELRWLASKKNLVIAVHKSQTATLLHTDSQQRVRGINADYLNLLKRALNIKLTLREYADHQKAMDALEEGEVDIVLSHLVASPPLNDDIAATKPLIITFPALVTTLHDSMRPLTSSKPVNIARVANYPPDEVIHQSFPKATIISFTNLYQALASVSAGQNDYFIGSNIITSSMISRYFTHSLNVVKYYNSPRQYNFFLTRKESVILNEVLNRFVDALTNEVRYEVSQNWLDTGNLAFLNKPLELTEHEKQWIKQHPDLKVLENPYSPPYSMTDENGSVRGVMGDILNIITLQTGLNFSPITVSHNIHAGTQLNPGGWDILPGAIYSEDRENNVLFAEAFITTPYVFVMQKAPDSEQTLKKGMKVAIPYYYELHSQLKEMYPEVEWIKVDNASAAFHKVKEGELDALVATQLNSRYMIDHYYPNELYHFLIPGVPNASLSFAFPRGEPELKDIINKALNAIPPSEVLRLTEKWIKMPNVTIDTWDLYSEQFYIVTTLSVLLVGSSLLWGFYLLRSVRRRKVIQGDLENQISFRKALSDSLPNPTYVVNWQGNVISHNSAFEHYFTADYYKNAMLPLENSESPFKDVFSNTHEVTAETKENRTIYTQVFEIDNGIEKRCINHWHTLCNLPASEHAVYICGWQDITETRDLIHALEVERNKAINATVAKSQFLATMSHEIRTPISSIMGFLELLSGSGLSKEQRVEAISLAYATGQSLLGLIGEILDVDKIESGNYQLQPQWVDIPTLVQNTCHSFGAIAASKSIALSCSSTFPDHYLVKIDPQAFKQVLSNLLSNALKFTTEGAVKITTSLVHIDDNHAVIKMTIMDSGSGLSQEEQQQLFKRYSQTSAGRQQTGSGLGLMICKELIKNMQGDLSLESHPGIGTTFTITIPVEIIQQVAAVEAKAEQPITLPEKLSILIADDHPTNRLLLKRQLNLLGYDVDEATDGVQALHKVSMQHYDLLITDVNMPNVDGFELTRKLREQNSSLPIWGLTANAQANEREKGLNCGMNLCLFKPLTLDVLKTHLSQLHQVAHIVPQYRHLDIEALKNNTANDLQLMQEILMTFQHETHKDLPAAFHALEAGDNRTFHQCIHRIHGAANILNLQKLINISHQLEITPVSDDSKPEILQLLNSVKEHIAELDQEIAVFCQQNN.

Residues 1–21 (MKFLPYIFLLCCGLWSTISFA) form the signal peptide. The Cytoplasmic segment spans residues 22–325 (DEDYIEYRGI…SMTDENGSVR (304 aa)). A helical transmembrane segment spans residues 326-346 (GVMGDILNIITLQTGLNFSPI). The Periplasmic portion of the chain corresponds to 347 to 537 (TVSHNIHAGT…TWDLYSEQFY (191 aa)). A helical membrane pass occupies residues 538 to 558 (IVTTLSVLLVGSSLLWGFYLL). Residues 559–1197 (RSVRRRKVIQ…EIAVFCQQNN (639 aa)) lie on the Cytoplasmic side of the membrane. In terms of domain architecture, Histidine kinase spans 718-938 (TMSHEIRTPI…TFTITIPVEI (221 aa)). Residue His721 is modified to Phosphohistidine; by autocatalysis. Positions 960–1074 (SILIADDHPT…VLKTHLSQLH (115 aa)) constitute a Response regulatory domain. Asp1009 carries the 4-aspartylphosphate modification. The HPt domain maps to 1098–1197 (DLQLMQEILM…EIAVFCQQNN (100 aa)). His1137 is subject to Phosphohistidine.

Post-translationally, activation requires a sequential transfer of a phosphate group from a His in the primary transmitter domain, to an Asp in the receiver domain and to a His in the secondary transmitter domain.

The protein resides in the cell inner membrane. The catalysed reaction is ATP + protein L-histidine = ADP + protein N-phospho-L-histidine.. In terms of biological role, member of the two-component regulatory system EvgS/EvgA. Phosphorylates EvgA via a four-step phosphorelay in response to environmental signals. This Escherichia coli O157:H7 protein is Sensor protein EvgS (evgS).